We begin with the raw amino-acid sequence, 291 residues long: Foldase protein PrsA 2 (291 aa).

An N-terminal signal peptide occupies residues 1–20 (MKKKLILGLVMMMALFSLAA). A lipid anchor (N-palmitoyl cysteine) is attached at cysteine 21. Cysteine 21 is lipidated: S-diacylglycerol cysteine. The 92-residue stretch at 135-226 (QPDITVSHIL…YGYHIIQMDK (92 aa)) folds into the PpiC domain.

Belongs to the PrsA family.

It localises to the cell membrane. The catalysed reaction is [protein]-peptidylproline (omega=180) = [protein]-peptidylproline (omega=0). Functionally, plays a major role in protein secretion by helping the post-translocational extracellular folding of several secreted proteins. The polypeptide is Foldase protein PrsA 2 (prsA2) (Listeria innocua serovar 6a (strain ATCC BAA-680 / CLIP 11262)).